The chain runs to 914 residues: Translation initiation factor IF-2 (914 aa).

2 disordered regions span residues 52-84 (GGGK…VKAP) and 98-326 (AGGN…GVRL). Low complexity predominate over residues 57–68 (AEGAAKAPAKAA). The span at 69 to 84 (AKGDAKTAAKGDVKAP) shows a compositional bias: basic and acidic residues. The segment covering 98–138 (AGGNGEAAAPPAQPGGTATTPAAQATPEAPARPGPAAARPS) has biased composition (low complexity). Pro residues-rich tracts occupy residues 139-169 (APAP…PAPK) and 193-207 (PRPV…PGAP). Residues 236–296 (RPGGGRPGGP…GAAGAFGRPG (61 aa)) are compositionally biased toward gly residues. The segment covering 300–309 (RRGRKSKRQK) has biased composition (basic residues). Positions 421-581 (TRPPVVTVMG…AVLLTADAAL (161 aa)) constitute a tr-type G domain. GTP is bound by residues 430–437 (GHVDHGKT), 469–473 (DTPGH), and 523–526 (NKID).

The protein belongs to the TRAFAC class translation factor GTPase superfamily. Classic translation factor GTPase family. IF-2 subfamily.

The protein localises to the cytoplasm. Functionally, one of the essential components for the initiation of protein synthesis. Protects formylmethionyl-tRNA from spontaneous hydrolysis and promotes its binding to the 30S ribosomal subunits. Also involved in the hydrolysis of GTP during the formation of the 70S ribosomal complex. This chain is Translation initiation factor IF-2, found in Mycobacterium avium (strain 104).